Consider the following 229-residue polypeptide: Flagellar L-ring protein (229 aa).

Residues 1–20 (MLKTVLRLPVCAALLALAAG) form the signal peptide. A lipid anchor (N-palmitoyl cysteine) is attached at Cys21. Cys21 is lipidated: S-diacylglycerol cysteine.

Belongs to the FlgH family. In terms of assembly, the basal body constitutes a major portion of the flagellar organelle and consists of four rings (L,P,S, and M) mounted on a central rod.

The protein resides in the cell outer membrane. It is found in the bacterial flagellum basal body. Functionally, assembles around the rod to form the L-ring and probably protects the motor/basal body from shearing forces during rotation. In Bordetella pertussis (strain Tohama I / ATCC BAA-589 / NCTC 13251), this protein is Flagellar L-ring protein.